Here is a 285-residue protein sequence, read N- to C-terminus: uncharacterized protein (285 aa).

An HTH araC/xylS-type domain is found at 184–282 (HSICNWVQDN…GLTPGEYSAR (99 aa)). DNA-binding regions (H-T-H motif) lie at residues 201-222 (ESVA…AQHG) and 249-272 (IHEV…RRQF).

This is an uncharacterized protein from Escherichia coli (strain K12).